A 508-amino-acid chain; its full sequence is Pentatricopeptide repeat-containing protein At3g04130, mitochondrial (508 aa).

The transit peptide at Met-1–Leu-74 directs the protein to the mitochondrion. PPR repeat units lie at residues Ser-120–Asp-150, Thr-154–Lys-188, Asn-189–His-219, Asn-223–Pro-257, Cys-258–Pro-292, Asn-293–Pro-327, Asp-328–Ile-363, Asn-364–Asn-398, Asp-400–Ser-434, and Asp-436–Pro-470.

The protein belongs to the PPR family. P subfamily.

It localises to the mitochondrion. This is Pentatricopeptide repeat-containing protein At3g04130, mitochondrial from Arabidopsis thaliana (Mouse-ear cress).